We begin with the raw amino-acid sequence, 310 residues long: Porphobilinogen deaminase (310 aa).

The residue at position 242 (C242) is an S-(dipyrrolylmethanemethyl)cysteine.

This sequence belongs to the HMBS family. As to quaternary structure, monomer. Requires dipyrromethane as cofactor.

It carries out the reaction 4 porphobilinogen + H2O = hydroxymethylbilane + 4 NH4(+). Its pathway is porphyrin-containing compound metabolism; protoporphyrin-IX biosynthesis; coproporphyrinogen-III from 5-aminolevulinate: step 2/4. Tetrapolymerization of the monopyrrole PBG into the hydroxymethylbilane pre-uroporphyrinogen in several discrete steps. This chain is Porphobilinogen deaminase, found in Shewanella pealeana (strain ATCC 700345 / ANG-SQ1).